Reading from the N-terminus, the 137-residue chain is Major seminal plasma glycoprotein PSP-II (137 aa).

Residues 1-21 (MKLGTAIPWALLLSTATLVST) form the signal peptide. Disulfide bonds link C30/C51 and C74/C95. Residues 30 to 131 (CGRVIKDTSG…SPFLIYFYGS (102 aa)) enclose the CUB domain. An N-linked (GlcNAc...) (complex) asparagine glycan is attached at N119.

Monomer or heterodimer with PSP-I (depending on the type of glycosylation of PSP-I). In terms of tissue distribution, seminal plasma or sperm.

Its subcellular location is the secreted. The chain is Major seminal plasma glycoprotein PSP-II from Sus scrofa (Pig).